The chain runs to 183 residues: Probable actin-related protein 2/3 complex subunit 3 (183 aa).

This sequence belongs to the ARPC3 family. As to quaternary structure, component of the Arp2/3 complex.

The protein resides in the cytoplasm. It is found in the cytoskeleton. Its function is as follows. Functions as a component of the Arp2/3 complex which is involved in regulation of actin polymerization and together with an activating nucleation-promoting factor (NPF) mediates the formation of branched actin networks. This Caenorhabditis elegans protein is Probable actin-related protein 2/3 complex subunit 3 (arx-5).